A 130-amino-acid polypeptide reads, in one-letter code: ACDNCSVAQYKVEYSISTQENVLDVWKVGCISEGVPVCDGTYPFSIEVSLIWVATDSTRRLNVEELNSSDYIEGDFTDQEVFGEFMSLKQVEMKTIEAKYDGPYRPATTRPKSLVSSEDVKGASKKKNSS.

The interval 100-130 is disordered; sequence YDGPYRPATTRPKSLVSSEDVKGASKKKNSS.

The sequence is that of 29 kDa protein from Beta vulgaris (Sugar beet).